Consider the following 248-residue polypeptide: Regulator of G-protein signaling 7-binding protein A (248 aa).

The disordered stretch occupies residues 1–32 (MSSAPNGRKNRPRTAGTIFQIGGKAPSRESER). S-palmitoyl cysteine attachment occurs at residues C243 and C244.

The protein belongs to the RGS7BP/RGS9BP family. Post-translationally, palmitoylated. Undergoes rapid palmitoylation turnover. Palmitoylation regulates the cell membrane and nuclear shuttling and the regulation of GPCR signaling. Upon depalmitoylation, it is targeted from the plasma membrane into the nucleus. GPCR signaling inhibits depalmitoylation and promotes localization to the plasma membrane.

It localises to the nucleus. The protein localises to the cytoplasm. It is found in the cell membrane. In terms of biological role, regulator of G protein-coupled receptor (GPCR) signaling. Regulatory subunit of the R7-Gbeta5 complexes that acts by controlling the subcellular location of the R7-Gbeta5 complexes. When palmitoylated, it targets the R7-Gbeta5 complexes to the plasma membrane, leading to inhibit G protein alpha subunits. When it is unpalmitoylated, the R7-Gbeta5 complexes undergo a nuclear/cytoplasmic shuttling. The sequence is that of Regulator of G-protein signaling 7-binding protein A (rgs7bpa) from Danio rerio (Zebrafish).